A 403-amino-acid chain; its full sequence is Accessory Sec system protein translocase subunit SecY2 (403 aa).

10 consecutive transmembrane segments (helical) span residues 17 to 37, 63 to 83, 105 to 125, 131 to 151, 157 to 177, 186 to 206, 240 to 260, 276 to 296, 339 to 359, and 366 to 386; these read MLYT…SIVS, LNIF…LMLI, ILTL…YVSK, DNIY…VWLA, YGIA…MMHQ, HIVI…LLFI, ITLM…HFIL, FDSP…GYFL, WFGL…TLFV, and IYFS…AETI.

The protein belongs to the SecY/SEC61-alpha family. SecY2 subfamily. As to quaternary structure, may form heterotrimers with SecE and SecG subunits (Potential). Component of the accessory SecA2/SecY2 protein translocase complex required to export cell wall protein SrpA.

It is found in the cell membrane. Its function is as follows. The central subunit of a protein translocation channel (Potential). Part of the accessory SecA2/SecY2 system specifically required to export SraP, a serine-rich repeat cell wall protein encoded upstream in the same operon. The sequence is that of Accessory Sec system protein translocase subunit SecY2 from Staphylococcus aureus (strain NCTC 8325 / PS 47).